Consider the following 136-residue polypeptide: Histone H3.3C (136 aa).

Residues 1 to 44 (MARTKQTARKSTGGKAPRKQLVTKAARKSAPSTGGMKKPHRYRP) are disordered. The residue at position 3 (Arg-3) is an Asymmetric dimethylarginine; by PRMT6; alternate. Position 3 is a citrulline; alternate (Arg-3). Thr-4 is modified (phosphothreonine; by HASPIN). Lys-5 carries the post-translational modification Allysine; alternate. Position 5 is an N6,N6,N6-trimethyllysine; alternate (Lys-5). Lys-5 carries the post-translational modification N6,N6-dimethyllysine; alternate. The residue at position 5 (Lys-5) is an N6-(2-hydroxyisobutyryl)lysine; alternate. Lys-5 carries the N6-(beta-hydroxybutyryl)lysine; alternate modification. Position 5 is an N6-acetyllysine; alternate (Lys-5). An N6-methyllysine; alternate modification is found at Lys-5. Gln-6 carries the 5-glutamyl dopamine; alternate modification. Gln-6 is subject to 5-glutamyl serotonin; alternate. Residue Thr-7 is modified to Phosphothreonine; by PKC. A Symmetric dimethylarginine modification is found at Arg-9. Lys-10 carries the post-translational modification N6,N6,N6-trimethyllysine; alternate. Lys-10 carries the post-translational modification N6,N6-dimethyllysine; alternate. Lys-10 bears the N6-(2-hydroxyisobutyryl)lysine; alternate mark. Lys-10 carries the post-translational modification N6-(beta-hydroxybutyryl)lysine; alternate. An N6-acetyllysine; alternate modification is found at Lys-10. N6-methyllysine; alternate is present on Lys-10. Residue Lys-10 is modified to N6-lactoyllysine; alternate. Ser-11 bears the ADP-ribosylserine; alternate mark. A Phosphoserine; alternate; by AURKB, AURKC, RPS6KA3, RPS6KA4 and RPS6KA5 modification is found at Ser-11. Thr-12 carries the phosphothreonine; by PKC modification. Residue Lys-15 is modified to N6-(2-hydroxyisobutyryl)lysine; alternate. Residue Lys-15 is modified to N6-(beta-hydroxybutyryl)lysine; alternate. An N6-acetyllysine; alternate modification is found at Lys-15. Residue Lys-15 is modified to N6-lactoyllysine; alternate. Lys-15 carries the N6-glutaryllysine; alternate modification. N6-succinyllysine; alternate is present on Lys-15. Arg-18 is modified (asymmetric dimethylarginine). N6-(2-hydroxyisobutyryl)lysine; alternate occurs at positions 19 and 24. Residues Lys-19 and Lys-24 each carry the N6-(beta-hydroxybutyryl)lysine; alternate modification. An N6-acetyllysine; alternate mark is found at Lys-19 and Lys-24. Lys-19 and Lys-24 each carry N6-methyllysine; alternate. An N6-lactoyllysine; alternate mark is found at Lys-19 and Lys-24. An N6-glutaryllysine; alternate mark is found at Lys-19 and Lys-24. N6-butyryllysine; alternate is present on residues Lys-19 and Lys-24. Residue Arg-27 is modified to Citrulline. N6,N6,N6-trimethyllysine; alternate is present on Lys-28. Lys-28 bears the N6,N6-dimethyllysine; alternate mark. Lys-28 is subject to N6-(2-hydroxyisobutyryl)lysine; alternate. Lys-28 is modified (N6-acetyllysine; alternate). Lys-28 is modified (N6-methyllysine; alternate). Residue Lys-28 is modified to N6-lactoyllysine; alternate. Lys-28 carries the post-translational modification N6-glutaryllysine; alternate. Position 29 is an ADP-ribosylserine; alternate (Ser-29). Ser-29 carries the phosphoserine; alternate; by AURKB, AURKC and RPS6KA5 modification. Residue Ser-32 is modified to Phosphoserine. Lys-37 bears the N6,N6,N6-trimethyllysine; alternate mark. The residue at position 37 (Lys-37) is an N6,N6-dimethyllysine; alternate. At Lys-37 the chain carries N6-(2-hydroxyisobutyryl)lysine; alternate. An N6-acetyllysine; alternate modification is found at Lys-37. Lys-37 carries the N6-methyllysine; alternate modification. The residue at position 38 (Lys-38) is an N6-methyllysine. Tyr-42 carries the phosphotyrosine modification. Lys-57 is subject to N6,N6,N6-trimethyllysine; alternate. The residue at position 57 (Lys-57) is an N6-(2-hydroxyisobutyryl)lysine; alternate. Residue Lys-57 is modified to N6-(beta-hydroxybutyryl)lysine; alternate. At Lys-57 the chain carries N6-acetyllysine; alternate. Lys-57 carries the N6-methyllysine; alternate modification. Lys-57 is subject to N6-lactoyllysine; alternate. Lys-57 is subject to N6-glutaryllysine; alternate. Residue Lys-57 is modified to N6-succinyllysine; alternate. Position 58 is a phosphoserine (Ser-58). Residues Lys-65 and Lys-80 each carry the N6-(2-hydroxyisobutyryl)lysine; alternate modification. N6-methyllysine; alternate is present on residues Lys-65 and Lys-80. N6,N6,N6-trimethyllysine; alternate is present on Lys-80. Position 80 is an N6,N6-dimethyllysine; alternate (Lys-80). Lys-80 is modified (N6-acetyllysine; alternate). Lys-80 carries the post-translational modification N6-lactoyllysine; alternate. Position 80 is an N6-glutaryllysine; alternate (Lys-80). An N6-succinyllysine; alternate modification is found at Lys-80. A Phosphothreonine modification is found at Thr-81. Ser-87 carries the phosphoserine modification. At Thr-108 the chain carries Phosphothreonine. Lys-116 carries the post-translational modification N6-acetyllysine; alternate. Lys-116 is subject to N6-glutaryllysine; alternate.

It belongs to the histone H3 family. In terms of assembly, the nucleosome is a histone octamer containing two molecules each of H2A, H2B, H3 and H4 assembled in one H3-H4 heterotetramer and two H2A-H2B heterodimers. The octamer wraps approximately 147 bp of DNA. Acetylation is generally linked to gene activation. Acetylation on Lys-19 (H3K18ac) favors methylation at Arg-18 (H3R17me). In terms of processing, citrullination at Arg-18 by PADI4 impairs methylation and represses transcription. Post-translationally, asymmetric dimethylation at Arg-18 (H3R17me2a) by CARM1 is linked to gene activation. Asymmetric dimethylation at Arg-3 (H3R2me2a) by PRMT6 is linked to gene repression and is mutually exclusive with H3 Lys-5 methylation (H3K4me2 and H3K4me3). H3R2me2a is present at the 3' of genes regardless of their transcription state and is enriched on inactive promoters, while it is absent on active promoters. Methylation at Lys-5 (H3K4me) and Lys-80 (H3K79me) are linked to gene activation. Methylation at Lys-5 (H3K4me) facilitates subsequent acetylation of H3 and H4. Methylation at Lys-80 (H3K79me) is associated with DNA double-strand break (DSB) responses and is a specific target for TP53BP1. Methylation at Lys-10 (H3K9me) and Lys-28 (H3K27me) are linked to gene repression. Methylation at Lys-10 (H3K9me) is a specific target for HP1 proteins (CBX1, CBX3 and CBX5) and prevents subsequent phosphorylation at Ser-11 (H3S10ph) and acetylation of H3 and H4. Methylation at Lys-5 (H3K4me) and Lys-80 (H3K79me) require preliminary monoubiquitination of H2B at 'Lys-120'. Methylation at Lys-10 (H3K9me) and Lys-28 (H3K27me) are enriched in inactive X chromosome chromatin. Monomethylation at Lys-57 (H3K56me1) by EHMT2/G9A in G1 phase promotes interaction with PCNA and is required for DNA replication. In terms of processing, phosphorylated at Thr-4 (H3T3ph) by HASPIN during prophase and dephosphorylated during anaphase. Phosphorylation at Ser-11 (H3S10ph) by AURKB is crucial for chromosome condensation and cell-cycle progression during mitosis and meiosis. In addition phosphorylation at Ser-11 (H3S10ph) by RPS6KA4 and RPS6KA5 is important during interphase because it enables the transcription of genes following external stimulation, like mitogens, stress, growth factors or UV irradiation and result in the activation of genes, such as c-fos and c-jun. Phosphorylation at Ser-11 (H3S10ph), which is linked to gene activation, prevents methylation at Lys-10 (H3K9me) but facilitates acetylation of H3 and H4. Phosphorylation at Ser-11 (H3S10ph) by AURKB mediates the dissociation of HP1 proteins (CBX1, CBX3 and CBX5) from heterochromatin. Phosphorylation at Ser-11 (H3S10ph) is also an essential regulatory mechanism for neoplastic cell transformation. Phosphorylated at Ser-29 (H3S28ph) by MAP3K20 isoform 1, RPS6KA5 or AURKB during mitosis or upon ultraviolet B irradiation. Phosphorylation at Thr-7 (H3T6ph) by PRKCB is a specific tag for epigenetic transcriptional activation that prevents demethylation of Lys-5 (H3K4me) by LSD1/KDM1A. At centromeres, specifically phosphorylated at Thr-12 (H3T11ph) from prophase to early anaphase, by DAPK3 and PKN1. Phosphorylation at Thr-12 (H3T11ph) by PKN1 or isoform M2 of PKM (PKM2) is a specific tag for epigenetic transcriptional activation that promotes demethylation of Lys-10 (H3K9me) by KDM4C/JMJD2C. Phosphorylation at Tyr-42 (H3Y41ph) by JAK2 promotes exclusion of CBX5 (HP1 alpha) from chromatin. Post-translationally, lysine deamination at Lys-5 (H3K4all) to form allysine is mediated by LOXL2. Allysine formation by LOXL2 only takes place on H3K4me3 and results in gene repression. Butyrylation of histones marks active promoters and competes with histone acetylation. It is present during late spermatogenesis. In terms of processing, succinylation at Lys-80 (H3K79succ) by KAT2A takes place with a maximum frequency around the transcription start sites of genes. It gives a specific tag for epigenetic transcription activation. Post-translationally, serine ADP-ribosylation constitutes the primary form of ADP-ribosylation of proteins in response to DNA damage. Serine ADP-ribosylation at Ser-11 (H3S10ADPr) is mutually exclusive with phosphorylation at Ser-11 (H3S10ph) and impairs acetylation at Lys-10 (H3K9ac).

It localises to the nucleus. The protein localises to the chromosome. Its function is as follows. Core component of nucleosome. Nucleosomes wrap and compact DNA into chromatin, limiting DNA accessibility to the cellular machineries which require DNA as a template. Histones thereby play a central role in transcription regulation, DNA repair, DNA replication and chromosomal stability. DNA accessibility is regulated via a complex set of post-translational modifications of histones, also called histone code, and nucleosome remodeling. In Bos taurus (Bovine), this protein is Histone H3.3C.